The chain runs to 224 residues: Putative MgpC-like protein MPN_150 (224 aa).

It belongs to the MgpC family.

The polypeptide is Putative MgpC-like protein MPN_150 (Mycoplasma pneumoniae (strain ATCC 29342 / M129 / Subtype 1) (Mycoplasmoides pneumoniae)).